The sequence spans 352 residues: S-adenosylmethionine:tRNA ribosyltransferase-isomerase (352 aa).

The protein belongs to the QueA family. As to quaternary structure, monomer.

It localises to the cytoplasm. It carries out the reaction 7-aminomethyl-7-carbaguanosine(34) in tRNA + S-adenosyl-L-methionine = epoxyqueuosine(34) in tRNA + adenine + L-methionine + 2 H(+). It functions in the pathway tRNA modification; tRNA-queuosine biosynthesis. Functionally, transfers and isomerizes the ribose moiety from AdoMet to the 7-aminomethyl group of 7-deazaguanine (preQ1-tRNA) to give epoxyqueuosine (oQ-tRNA). In Vibrio cholerae serotype O1 (strain ATCC 39315 / El Tor Inaba N16961), this protein is S-adenosylmethionine:tRNA ribosyltransferase-isomerase.